We begin with the raw amino-acid sequence, 279 residues long: NADPH-dependent 7-cyano-7-deazaguanine reductase (279 aa).

A substrate-binding site is contributed by 86-88 (IES). An NADPH-binding site is contributed by 88–89 (SK). Cys187 functions as the Thioimide intermediate in the catalytic mechanism. Asp194 functions as the Proton donor in the catalytic mechanism. 226–227 (HE) serves as a coordination point for substrate. An NADPH-binding site is contributed by 255 to 256 (RG).

It belongs to the GTP cyclohydrolase I family. QueF type 2 subfamily. Homodimer.

It localises to the cytoplasm. It carries out the reaction 7-aminomethyl-7-carbaguanine + 2 NADP(+) = 7-cyano-7-deazaguanine + 2 NADPH + 3 H(+). It functions in the pathway tRNA modification; tRNA-queuosine biosynthesis. Its function is as follows. Catalyzes the NADPH-dependent reduction of 7-cyano-7-deazaguanine (preQ0) to 7-aminomethyl-7-deazaguanine (preQ1). The polypeptide is NADPH-dependent 7-cyano-7-deazaguanine reductase (Haemophilus influenzae (strain PittEE)).